Here is a 294-residue protein sequence, read N- to C-terminus: Cytosolic Fe-S cluster assembly factor CFD1 (294 aa).

25 to 32 (GKGGVGKS) provides a ligand contact to ATP. [4Fe-4S] cluster-binding residues include cysteine 214 and cysteine 217.

Belongs to the Mrp/NBP35 ATP-binding proteins family. NUBP2/CFD1 subfamily. Heterotetramer of 2 NBP35 and 2 CFD1 chains. The cofactor is [4Fe-4S] cluster.

Its subcellular location is the cytoplasm. In terms of biological role, component of the cytosolic iron-sulfur (Fe/S) protein assembly (CIA) machinery. Required for maturation of extramitochondrial Fe-S proteins. The NBP35-CFD1 heterotetramer forms a Fe-S scaffold complex, mediating the de novo assembly of an Fe-S cluster and its transfer to target apoproteins. Required for biogenesis and export of both ribosomal subunits, which may reflect a role in assembly of the Fe/S clusters in RLI1, a protein which performs rRNA processing and ribosome export. In Candida albicans (strain SC5314 / ATCC MYA-2876) (Yeast), this protein is Cytosolic Fe-S cluster assembly factor CFD1.